Consider the following 944-residue polypeptide: Lactoferrin-binding protein A (944 aa).

The N-terminal stretch at 1–27 (MNKKHGFSLTLTALAIAAAFPSYAANP) is a signal peptide. In terms of domain architecture, TBDR plug spans 52 to 178 (RRSKEATGLG…LGGAVAFRTK (127 aa)). The TBDR beta-barrel domain occupies 189–944 (SWGIQAKTAY…NFSLALEMKF (756 aa)). The TonB C-terminal box signature appears at 927-944 (GRYAAPGRNFSLALEMKF).

The protein belongs to the TonB-dependent receptor family.

Its subcellular location is the cell outer membrane. In terms of biological role, unknown. May be an iron-siderophore receptor. The sequence is that of Lactoferrin-binding protein A (lbpA) from Neisseria meningitidis serogroup A / serotype 4A (strain DSM 15465 / Z2491).